A 725-amino-acid chain; its full sequence is Probable alpha-galactosidase G (725 aa).

The N-linked (GlcNAc...) asparagine glycan is linked to asparagine 407. Residue aspartate 484 is the Nucleophile of the active site. N-linked (GlcNAc...) asparagine glycosylation is present at asparagine 490. Residue aspartate 546 is the Proton donor of the active site. The N-linked (GlcNAc...) asparagine glycan is linked to asparagine 672.

The protein belongs to the glycosyl hydrolase 36 family. In terms of assembly, homotetramer. The cofactor is Mg(2+). It depends on NAD(+) as a cofactor.

Its subcellular location is the secreted. It catalyses the reaction Hydrolysis of terminal, non-reducing alpha-D-galactose residues in alpha-D-galactosides, including galactose oligosaccharides, galactomannans and galactolipids.. In terms of biological role, hydrolyzes a variety of simple alpha-D-galactoside as well as more complex molecules such as oligosaccharides and polysaccharides. The polypeptide is Probable alpha-galactosidase G (aglG) (Aspergillus terreus (strain NIH 2624 / FGSC A1156)).